A 1070-amino-acid chain; its full sequence is Protocadherin-8 (1070 aa).

Positions 1–29 (MSPAKRWGSPCLFPLQLFSLCWVLSVAQS) are cleaved as a signal peptide. Cadherin domains are found at residues 30–135 (KTVR…APRF), 136–245 (PRAQ…SPAF), 247–354 (QGAV…APEI), 393–497 (QEAG…APIF), 498–609 (TKPV…SPIL), and 615–721 (ANGS…VPAS). Over 30 to 747 (KTVRYSTFEE…SGPSLQWDTP (718 aa)) the chain is Extracellular. Asparagine 616 carries N-linked (GlcNAc...) asparagine glycosylation. Over residues 716–725 (SAVPASSGSP) the composition is skewed to low complexity. The tract at residues 716-740 (SAVPASSGSPEHSRPPGSRLAPSGP) is disordered. Residues 748–768 (LIVIIVLAGSCTLLLAAIIAI) traverse the membrane as a helical segment. The Cytoplasmic portion of the chain corresponds to 769 to 1070 (ATTCNRRKKE…SPKKGINENV (302 aa)). Disordered regions lie at residues 777–859 (KEVR…TGES), 906–928 (REAE…DSDS), and 1046–1070 (IGVP…NENV). Basic and acidic residues-rich tracts occupy residues 780–790 (RKGGALREERP) and 906–921 (REAE…KGDS). The residue at position 1053 (serine 1053) is a Phosphoserine.

The N-terminal extracellular domain forms homophilic interactions; these interactions activate p38 MAPK via TAOK2 and trigger endocytosis. Interacts with CDH2; this interaction may lead to CDH2 cointernalization. Interacts with CDH11. Interacts with TAOK2.

It localises to the cell membrane. Its subcellular location is the cell projection. The protein localises to the dendrite. It is found in the presynaptic cell membrane. The protein resides in the postsynaptic cell membrane. Calcium-dependent cell-adhesion protein. May play a role in activity-induced synaptic reorganization underlying long term memory. Could be involved in CDH2 internalization through TAOK2/p38 MAPK pathway. In hippocampal neurons, may play a role in the down-regulation of dendritic spines, maybe through its action on CDH2 endocytosis. The sequence is that of Protocadherin-8 (Pcdh8) from Mus musculus (Mouse).